The following is a 298-amino-acid chain: Mitochondrial nicotinamide adenine dinucleotide transporter SLC25A51 (298 aa).

Over residues 1–11 (MMDSEAHEKRP) the composition is skewed to basic and acidic residues. A disordered region spans residues 1 to 21 (MMDSEAHEKRPPMLTSSNQDL). 3 Solcar repeats span residues 28 to 108 (VGDM…LSRL), 117 to 201 (PEFA…IKES), and 214 to 297 (NDFI…LLKI). The next 6 membrane-spanning stretches (helical) occupy residues 36-56 (CGYCAAFNNVAITYPVQKILF), 85-105 (LPPLMQKTTTLALMFGLYEDL), 119-139 (FATRSVAALLAGTTEAILTPF), 180-200 (ILFRNGFGNVLFFGLRGPIKE), 216-236 (FICGGVLGAVLGFLSFPINVV), and 269-290 (LFRGAHLNYHRSLISWGIINAT).

Belongs to the mitochondrial carrier (TC 2.A.29) family.

The protein localises to the mitochondrion inner membrane. The catalysed reaction is NAD(+)(in) = NAD(+)(out). Its function is as follows. Mitochondrial membrane carrier protein that mediates the import of NAD(+) into mitochondria. Mitochondrial NAD(+) is required for glycolysis and mitochondrial respiration. Compared to SLC25A52, SLC25A51-mediated transport is essential for the import of NAD(+) in mitochondria. The transport mechanism, uniport or antiport, its electrogenicity and substrate selectivity, remain to be elucidated. The chain is Mitochondrial nicotinamide adenine dinucleotide transporter SLC25A51 from Mus musculus (Mouse).